The primary structure comprises 64 residues: Small ribosomal subunit protein bS21 (64 aa).

The tract at residues 42 to 64 (KKEKEKAAAKKRNKYNKRRSFYY) is disordered. The segment covering 50–64 (AKKRNKYNKRRSFYY) has biased composition (basic residues).

The protein belongs to the bacterial ribosomal protein bS21 family.

This is Small ribosomal subunit protein bS21 from Malacoplasma penetrans (strain HF-2) (Mycoplasma penetrans).